A 240-amino-acid chain; its full sequence is Bidirectional sugar transporter SWEET5 (240 aa).

Residues 1-9 (MTDPHTART) are Extracellular-facing. Residues 10–30 (IVGIVGNVISFGLFCAPIPTM) traverse the membrane as a helical segment. One can recognise a MtN3/slv 1 domain in the interval 10-95 (IVGIVGNVIS…YVTIFFVFAT (86 aa)). Residues 31–45 (VKIWKMKSVSEFKPD) are Cytoplasmic-facing. A helical membrane pass occupies residues 46-66 (PYVATVLNCMMWTFYGLPFVQ). The Extracellular portion of the chain corresponds to 67–72 (PDSLLV). Residues 73–93 (ITINGTGLFMELVYVTIFFVF) traverse the membrane as a helical segment. Residues 94–103 (ATSPVRRKIT) are Cytoplasmic-facing. A helical transmembrane segment spans residues 104-124 (IAMVIEVIFMAVVIFCTMYFL). Residues 125–131 (HTTKQRS) lie on the Extracellular side of the membrane. The chain crosses the membrane as a helical span at residues 132-152 (MLIGILCIVFNVIMYAAPLTV). A MtN3/slv 2 domain is found at 133 to 217 (LIGILCIVFN…IIYITYYKTT (85 aa)). Residues 153-165 (MKLVIKTKSVKYM) are Cytoplasmic-facing. A helical membrane pass occupies residues 166–186 (PFFLSLANFMNGVVWVIYACL). Residues 187–190 (KFDP) are Extracellular-facing. The chain crosses the membrane as a helical span at residues 191–211 (YILIPNGLGSLSGIIQLIIYI). Residues 212 to 240 (TYYKTTNWNDDDEDKEKRYSNAGIELGQA) lie on the Cytoplasmic side of the membrane.

This sequence belongs to the SWEET sugar transporter family. In terms of assembly, forms homooligomers and heterooligomers with SWEET6, SWEET8, SWEET9, SWEET11 and SWEET12.

Its subcellular location is the cell membrane. In terms of biological role, mediates both low-affinity uptake and efflux of sugar across the plasma membrane. May play roles in nurturing the male gametophyte. The protein is Bidirectional sugar transporter SWEET5 of Arabidopsis thaliana (Mouse-ear cress).